We begin with the raw amino-acid sequence, 307 residues long: Undecaprenyl-diphosphatase (307 aa).

A run of 6 helical transmembrane segments spans residues Ala40–Phe60, Leu79–Phe99, Leu107–Val127, Ala183–Phe203, Ile219–Val239, and Leu249–Ala269.

Belongs to the UppP family.

It is found in the cell inner membrane. It catalyses the reaction di-trans,octa-cis-undecaprenyl diphosphate + H2O = di-trans,octa-cis-undecaprenyl phosphate + phosphate + H(+). In terms of biological role, catalyzes the dephosphorylation of undecaprenyl diphosphate (UPP). Confers resistance to bacitracin. In Sorangium cellulosum (strain So ce56) (Polyangium cellulosum (strain So ce56)), this protein is Undecaprenyl-diphosphatase.